The primary structure comprises 555 residues: Protein NRT1/ PTR FAMILY 5.12 (555 aa).

The next 2 helical transmembrane spans lie at 53-73 (FAYFGIASNLITYFTEALGES) and 83-103 (LWLGTAAFLPLIWGSIADSFL). Residue Thr-108 is modified to Phosphothreonine. Transmembrane regions (helical) follow at residues 109–129 (ILLTSSFYIMGLGLLTFSATI), 148–168 (VIIFFCALYLIALGEGGFKVC), 190–210 (SYFNWLYFAISIGILTTRLVT), 221–241 (LGYAIPCLSMMLALFLFLLGI), 315–335 (AVLSLIPIWLCSLVFGIVFAQ), 357–377 (VPAATLQCFISLAILVFIPIY), 401–421 (ISTGIFLSIISMVIAALVEMK), 443–463 (VCWLIPQYILFGVSDVFTMVG), 482–502 (ALYLSIIGIGNFLSSFMVSVI), and 526–546 (YFYWLLACLSSLAFIFTVYFA).

The protein belongs to the major facilitator superfamily. Proton-dependent oligopeptide transporter (POT/PTR) (TC 2.A.17) family. As to expression, expressed in shoots and roots.

The protein resides in the membrane. This Arabidopsis thaliana (Mouse-ear cress) protein is Protein NRT1/ PTR FAMILY 5.12 (NPF5.12).